The primary structure comprises 88 residues: UPF0250 protein SO_1163 (88 aa).

Belongs to the UPF0250 family.

The protein is UPF0250 protein SO_1163 of Shewanella oneidensis (strain ATCC 700550 / JCM 31522 / CIP 106686 / LMG 19005 / NCIMB 14063 / MR-1).